Consider the following 152-residue polypeptide: 3-hydroxyacyl-[acyl-carrier-protein] dehydratase FabZ (152 aa).

Residue His-58 is part of the active site.

It belongs to the thioester dehydratase family. FabZ subfamily.

The protein resides in the cytoplasm. It catalyses the reaction a (3R)-hydroxyacyl-[ACP] = a (2E)-enoyl-[ACP] + H2O. Involved in unsaturated fatty acids biosynthesis. Catalyzes the dehydration of short chain beta-hydroxyacyl-ACPs and long chain saturated and unsaturated beta-hydroxyacyl-ACPs. The protein is 3-hydroxyacyl-[acyl-carrier-protein] dehydratase FabZ of Prochlorococcus marinus (strain MIT 9215).